The following is a 107-amino-acid chain: U1-lycotoxin-Ls1l (107 aa).

The N-terminal stretch at 1 to 20 is a signal peptide; it reads MMKVLVVVALLVTLISYSSS. The propeptide occupies 21–41; it reads EGIDDLEADELLSLMANEQTR. 4 disulfide bridges follow: Cys-44–Cys-59, Cys-51–Cys-68, Cys-58–Cys-86, and Cys-70–Cys-84.

It belongs to the neurotoxin 19 (CSTX) family. 04 (U1-Lctx) subfamily. In terms of tissue distribution, expressed by the venom gland.

The protein localises to the secreted. This Lycosa singoriensis (Wolf spider) protein is U1-lycotoxin-Ls1l.